The primary structure comprises 98 residues: UPF0251 protein VC0395_0048/VC395_A0084 (98 aa).

This sequence belongs to the UPF0251 family.

The protein is UPF0251 protein VC0395_0048/VC395_A0084 of Vibrio cholerae serotype O1 (strain ATCC 39541 / Classical Ogawa 395 / O395).